A 1030-amino-acid polypeptide reads, in one-letter code: Alpha-L-rhamnosidase (1030 aa).

The tract at residues 133-297 (PSLEGSSWIW…GAGPWGRVAP (165 aa)) is carbohydrate-binding module-67 (CBM67). 2 residues coordinate Ca(2+): Asp179 and Asn180. Alpha-L-rhamnose contacts are provided by residues 179–180 (DN) and Trp203. Ca(2+) is bound by residues Asn228 and Pro233. Residues Asp630, 634–636 (RDE), Asp643, and Trp695 contribute to the alpha-L-rhamnose site. Glu636 serves as the catalytic Proton donor. The Proton acceptor role is filled by Glu895. Residue His916 coordinates alpha-L-rhamnose.

It belongs to the glycosyl hydrolase 78 family.

The enzyme catalyses Hydrolysis of terminal non-reducing alpha-L-rhamnose residues in alpha-L-rhamnosides.. Its function is as follows. Alpha-L-rhamnosidase which is able to degrade p-nitrophenyl-alpha-L-rhamnopyranoside (PNP-Rha) in vitro. Releases L-rhamnose from citrus flavonoids such as naringin, rutin and hesperidin, and the arabinogalactan-protein (AGP) gum arabic. AGPs are a family of proteoglycans that are localized on the cell surfaces of higher plants. Cleaves both the alpha-1,6 and the alpha-1,2-linked rhamnosyl residues. This is Alpha-L-rhamnosidase from Streptomyces avermitilis (strain ATCC 31267 / DSM 46492 / JCM 5070 / NBRC 14893 / NCIMB 12804 / NRRL 8165 / MA-4680).